The primary structure comprises 64 residues: Prokaryotic ubiquitin-like protein Pup (64 aa).

Residues 1–37 form a disordered region; that stretch reads MAQEQTKRGGGGGEDDDLSGGAGAGQERREKLAEETD. The tract at residues 21–58 is ARC ATPase binding; it reads GAGAGQERREKLAEETDDLLDEIDDVLEENAEDFVRAY. Residues 24 to 52 adopt a coiled-coil conformation; it reads AGQERREKLAEETDDLLDEIDDVLEENAE. Residue Gln-64 is modified to Deamidated glutamine. An Isoglutamyl lysine isopeptide (Gln-Lys) (interchain with K-? in acceptor proteins) cross-link involves residue Gln-64.

It belongs to the prokaryotic ubiquitin-like protein family. In terms of assembly, strongly interacts with the proteasome-associated ATPase ARC through a hydrophobic interface; the interacting region of Pup lies in its C-terminal half. There is one Pup binding site per ARC hexamer ring. In terms of processing, is modified by deamidation of its C-terminal glutamine to glutamate by the deamidase Dop, a prerequisite to the subsequent pupylation process.

The protein operates within protein degradation; proteasomal Pup-dependent pathway. Its function is as follows. Protein modifier that is covalently attached to lysine residues of substrate proteins, thereby targeting them for proteasomal degradation. The tagging system is termed pupylation. This is Prokaryotic ubiquitin-like protein Pup from Mycobacterium sp. (strain JLS).